A 253-amino-acid chain; its full sequence is Glucosamine-6-phosphate deaminase (253 aa).

Asp67 serves as the catalytic Proton acceptor; for enolization step. The active-site For ring-opening step is the Asn136. His138 acts as the Proton acceptor; for ring-opening step in catalysis. The active-site For ring-opening step is the Glu143.

Belongs to the glucosamine/galactosamine-6-phosphate isomerase family. NagB subfamily.

It catalyses the reaction alpha-D-glucosamine 6-phosphate + H2O = beta-D-fructose 6-phosphate + NH4(+). Its pathway is amino-sugar metabolism; N-acetylneuraminate degradation; D-fructose 6-phosphate from N-acetylneuraminate: step 5/5. Catalyzes the reversible isomerization-deamination of glucosamine 6-phosphate (GlcN6P) to form fructose 6-phosphate (Fru6P) and ammonium ion. The chain is Glucosamine-6-phosphate deaminase from Thermoanaerobacter pseudethanolicus (strain ATCC 33223 / 39E) (Clostridium thermohydrosulfuricum).